Here is a 290-residue protein sequence, read N- to C-terminus: UPF0750 membrane protein YdeO (290 aa).

Helical transmembrane passes span 18-38, 56-76, 83-103, 112-132, and 165-185; these read IIMV…VLIP, LFNL…VWLG, SFAL…SFFH, DTLL…GLAL, and LFVF…LSVI.

This sequence belongs to the UPF0750 family.

It localises to the cell membrane. This is UPF0750 membrane protein YdeO (ydeO) from Bacillus subtilis (strain 168).